Here is a 300-residue protein sequence, read N- to C-terminus: uncharacterized protein (300 aa).

Residues 67–179 adopt a coiled-coil conformation; that stretch reads LAFEELEKEK…IAKANELKDS (113 aa). The span at 203–285 shows a compositional bias: low complexity; that stretch reads STTASLSQSE…PSSQSTYQQQ (83 aa). The tract at residues 203 to 300 is disordered; sequence STTASLSQSE…KGFFARLFNL (98 aa).

This is an uncharacterized protein from Staphylococcus epidermidis (strain ATCC 12228 / FDA PCI 1200).